Reading from the N-terminus, the 330-residue chain is Putative UV-damage endonuclease (330 aa).

The protein belongs to the uve1/UvsE family.

It is found in the virion. Its function is as follows. Endonuclease for the repair of UV-irradiated DNA. The protein is Putative UV-damage endonuclease of Acanthamoeba polyphaga mimivirus (APMV).